The following is a 227-amino-acid chain: Small ribosomal subunit protein uS7 (227 aa).

Acidic residues-rich tracts occupy residues 1–12 (MSESDTDPDIDD) and 20–31 (NDVDVAVDESES). Residues 1–43 (MSESDTDPDIDDDAHNNGDNDVDVAVDESESAETTTDTDTASA) form a disordered region. The span at 32-43 (AETTTDTDTASA) shows a compositional bias: low complexity.

It belongs to the universal ribosomal protein uS7 family. In terms of assembly, part of the 30S ribosomal subunit.

One of the primary rRNA binding proteins, it binds directly to 16S rRNA where it nucleates assembly of the head domain of the 30S subunit. Is located at the subunit interface close to the decoding center. The sequence is that of Small ribosomal subunit protein uS7 from Haloquadratum walsbyi (strain DSM 16790 / HBSQ001).